The primary structure comprises 306 residues: Pantothenate kinase (306 aa).

91–98 (GSVAVGKS) is a binding site for ATP.

The protein belongs to the prokaryotic pantothenate kinase family.

It localises to the cytoplasm. The catalysed reaction is (R)-pantothenate + ATP = (R)-4'-phosphopantothenate + ADP + H(+). It functions in the pathway cofactor biosynthesis; coenzyme A biosynthesis; CoA from (R)-pantothenate: step 1/5. The protein is Pantothenate kinase of Streptococcus equi subsp. zooepidemicus (strain H70).